The chain runs to 148 residues: Large ribosomal subunit protein uL11 (148 aa).

The disordered stretch occupies residues 89-108 (EKKKGSGAHKPGKEKVGQVT).

The protein belongs to the universal ribosomal protein uL11 family. As to quaternary structure, part of the ribosomal stalk of the 50S ribosomal subunit. Interacts with L10 and the large rRNA to form the base of the stalk. L10 forms an elongated spine to which L12 dimers bind in a sequential fashion forming a multimeric L10(L12)X complex. Post-translationally, one or more lysine residues are methylated.

In terms of biological role, forms part of the ribosomal stalk which helps the ribosome interact with GTP-bound translation factors. This chain is Large ribosomal subunit protein uL11, found in Anaeromyxobacter sp. (strain Fw109-5).